The primary structure comprises 587 residues: Kelch-like protein 3 (587 aa).

A disordered region spans residues 1–22 (MDGESIKPSSQPLIQTGDDEKN). Ser10 bears the Phosphoserine mark. Residues 50 to 117 (CDVMIVAEDV…IYTAEIEVTE (68 aa)) form the BTB domain. The region spanning 152 to 254 (CLGIRAFADV…PRDYLVQTVE (103 aa)) is the BACK domain. Residue Thr295 is modified to Phosphothreonine. 6 Kelch repeats span residues 302–347 (VMIV…FMAG), 348–394 (HVYA…VLND), 396–441 (LYAV…VVEG), 442–490 (KLYA…VLSG), 491–537 (QLYA…AVNG), and 539–585 (LYVV…VIHK). At Thr375 the chain carries Phosphothreonine. Phosphoserine occurs at positions 376 and 433.

Belongs to the KLHL3 family. Homodimer. Component of the BCR(KLHL3) E3 ubiquitin ligase complex, at least composed of CUL3 and KLHL3 and RBX1. Interacts with CLDN8. Phosphorylation at Ser-433 by PKA or PKC decreases the interaction with WNK1 and WNK4, leading to inhibit their degradation by the BCR(KLHL3) complex. Phosphorylated at Ser-433 by PKC in response to angiotensin II signaling, decreasing ability to promote degradation of WNK1 and WNK4, leading to activation of Na-Cl cotransporter SLC12A3/NCC. Phosphorylation at Ser-433 is increased by insulin. Dephosphorylated at Ser-433 by calcineurin PPP3CA, promoting degradation of WNK1 and WNK4.

The protein resides in the cytoplasm. It is found in the cytoskeleton. It localises to the cytosol. The protein operates within protein modification; protein ubiquitination. Functionally, substrate-specific adapter of a BCR (BTB-CUL3-RBX1) E3 ubiquitin ligase complex that acts as a regulator of ion transport in the distal nephron. The BCR(KLHL3) complex acts by mediating ubiquitination and degradation of WNK1 and WNK4, two activators of Na-Cl cotransporter SLC12A3/NCC in distal convoluted tubule cells of kidney, thereby regulating NaCl reabsorption. The BCR(KLHL3) complex also mediates ubiquitination and degradation of WNK3. The BCR(KLHL3) complex also mediates ubiquitination of CLDN8, a tight-junction protein required for paracellular chloride transport in the kidney, leading to its degradation. In Bos taurus (Bovine), this protein is Kelch-like protein 3 (KLHL3).